The primary structure comprises 320 residues: uncharacterized protein (320 aa).

46–53 contacts ATP; the sequence is DVPGVGKT.

Belongs to the MoxR family.

This is an uncharacterized protein from Bacillus subtilis (strain 168).